The following is a 388-amino-acid chain: Mannitol-1-phosphate 5-dehydrogenase (388 aa).

5 to 16 (AIQFGGGNIGRG) lines the NAD(+) pocket. Lysine 213 is an active-site residue.

The protein belongs to the mannitol dehydrogenase family. In terms of assembly, monomer.

It carries out the reaction D-mannitol 1-phosphate + NAD(+) = beta-D-fructose 6-phosphate + NADH + H(+). Its function is as follows. Catalyzes the NAD(H)-dependent interconversion of D-fructose 6-phosphate and D-mannitol 1-phosphate in the mannitol metabolic pathway. This is Mannitol-1-phosphate 5-dehydrogenase (mpdA) from Aspergillus terreus (strain NIH 2624 / FGSC A1156).